Consider the following 152-residue polypeptide: Deoxyuridine 5'-triphosphate nucleotidohydrolase (152 aa).

Substrate-binding positions include 71 to 73, N84, and 88 to 90; these read RSG and TID.

Belongs to the dUTPase family. The cofactor is Mg(2+).

It carries out the reaction dUTP + H2O = dUMP + diphosphate + H(+). It participates in pyrimidine metabolism; dUMP biosynthesis; dUMP from dCTP (dUTP route): step 2/2. This enzyme is involved in nucleotide metabolism: it produces dUMP, the immediate precursor of thymidine nucleotides and it decreases the intracellular concentration of dUTP so that uracil cannot be incorporated into DNA. In Roseobacter denitrificans (strain ATCC 33942 / OCh 114) (Erythrobacter sp. (strain OCh 114)), this protein is Deoxyuridine 5'-triphosphate nucleotidohydrolase.